A 326-amino-acid polypeptide reads, in one-letter code: Tetraacyldisaccharide 4'-kinase (326 aa).

55–62 (TAGGNGKT) provides a ligand contact to ATP.

Belongs to the LpxK family.

The enzyme catalyses a lipid A disaccharide + ATP = a lipid IVA + ADP + H(+). It participates in glycolipid biosynthesis; lipid IV(A) biosynthesis; lipid IV(A) from (3R)-3-hydroxytetradecanoyl-[acyl-carrier-protein] and UDP-N-acetyl-alpha-D-glucosamine: step 6/6. Functionally, transfers the gamma-phosphate of ATP to the 4'-position of a tetraacyldisaccharide 1-phosphate intermediate (termed DS-1-P) to form tetraacyldisaccharide 1,4'-bis-phosphate (lipid IVA). The protein is Tetraacyldisaccharide 4'-kinase of Serratia proteamaculans (strain 568).